The following is a 386-amino-acid chain: N-terminal EF-hand calcium-binding protein 2 (386 aa).

Omega-N-methylarginine is present on R10. R42 carries the asymmetric dimethylarginine modification. EF-hand domains follow at residues 60–95 (GGTAVILDIFRRADKNDDGKLSLEEFQLFFADGVLN) and 96–129 (EKELEDLFHTIDSDNTNHVDTKELCDYFVDHMGD). Ca(2+)-binding residues include D73, N75, D77, K79, E84, D107, D109, T111, H113, and E118. A coiled-coil region spans residues 170 to 201 (LKETANQIQSLLSSVESAVEAIEEQTSQLRQN). An ABM domain is found at 286-375 (QLVRQEMAVC…SQPEALSRIL (90 aa)).

Interacts (calcium-dependent) with ADORA2A and GRM5. In terms of tissue distribution, expressed in brain. Expressed in the spinal dorsal horn with especially strong expression in lamina IIi; found in excitory synaptic boutons and in ependymal cells (at protein level).

It localises to the cytoplasm. It is found in the cell projection. Its subcellular location is the dendrite. The protein localises to the axon. The protein resides in the cell membrane. In terms of biological role, may act as a signaling scaffold protein that senses intracellular calcium. Can modulate ligand-induced internalization of ADORA2A and coupling efficiency of mGluR5/GRM5; for both receptors may regulate signaling activity such as promoting MAPK1/3 (ERK1/2) activation. This Homo sapiens (Human) protein is N-terminal EF-hand calcium-binding protein 2 (NECAB2).